The primary structure comprises 365 residues: Cobalt-precorrin-5B C(1)-methyltransferase (365 aa).

This sequence belongs to the CbiD family.

It catalyses the reaction Co-precorrin-5B + S-adenosyl-L-methionine = Co-precorrin-6A + S-adenosyl-L-homocysteine. It participates in cofactor biosynthesis; adenosylcobalamin biosynthesis; cob(II)yrinate a,c-diamide from sirohydrochlorin (anaerobic route): step 6/10. In terms of biological role, catalyzes the methylation of C-1 in cobalt-precorrin-5B to form cobalt-precorrin-6A. The polypeptide is Cobalt-precorrin-5B C(1)-methyltransferase (Variovorax paradoxus (strain S110)).